Here is a 313-residue protein sequence, read N- to C-terminus: Intracellular endo-alpha-(1-&gt;5)-L-arabinanase (313 aa).

D27 functions as the Proton acceptor in the catalytic mechanism. Substrate is bound by residues D27, G105, 144–147 (NAID), and 164–166 (SFW). The active-site Proton donor is the E201. H271 serves as a coordination point for Ca(2+).

Belongs to the glycosyl hydrolase 43 family. In terms of assembly, monomer. The cofactor is Ca(2+).

It is found in the cytoplasm. It catalyses the reaction Endohydrolysis of (1-&gt;5)-alpha-arabinofuranosidic linkages in (1-&gt;5)-arabinans.. The protein operates within glycan metabolism; L-arabinan degradation. Its function is as follows. Involved in the degradation of arabinan and is a key enzyme in the complete degradation of the plant cell wall. Catalyzes the cleavage of endo alpha-(1-&gt;5)-L-arabinofuranosyl residues in debranched arabinan. This Geobacillus thermodenitrificans protein is Intracellular endo-alpha-(1-&gt;5)-L-arabinanase (abn-ts).